A 623-amino-acid polypeptide reads, in one-letter code: tRNA uridine 5-carboxymethylaminomethyl modification enzyme MnmG (623 aa).

Residues 11–16 (GAGHAG), V123, and S178 contribute to the FAD site. 270–284 (GPRYCPSIETKIVTF) serves as a coordination point for NAD(+). Q367 provides a ligand contact to FAD.

The protein belongs to the MnmG family. As to quaternary structure, homodimer. Heterotetramer of two MnmE and two MnmG subunits. FAD is required as a cofactor.

The protein localises to the cytoplasm. NAD-binding protein involved in the addition of a carboxymethylaminomethyl (cmnm) group at the wobble position (U34) of certain tRNAs, forming tRNA-cmnm(5)s(2)U34. This chain is tRNA uridine 5-carboxymethylaminomethyl modification enzyme MnmG, found in Phocaeicola vulgatus (strain ATCC 8482 / DSM 1447 / JCM 5826 / CCUG 4940 / NBRC 14291 / NCTC 11154) (Bacteroides vulgatus).